We begin with the raw amino-acid sequence, 252 residues long: 1-(5-phosphoribosyl)-5-[(5-phosphoribosylamino)methylideneamino] imidazole-4-carboxamide isomerase (252 aa).

The active-site Proton acceptor is Asp10. Catalysis depends on Asp129, which acts as the Proton donor.

Belongs to the HisA/HisF family.

It localises to the cytoplasm. The enzyme catalyses 1-(5-phospho-beta-D-ribosyl)-5-[(5-phospho-beta-D-ribosylamino)methylideneamino]imidazole-4-carboxamide = 5-[(5-phospho-1-deoxy-D-ribulos-1-ylimino)methylamino]-1-(5-phospho-beta-D-ribosyl)imidazole-4-carboxamide. Its pathway is amino-acid biosynthesis; L-histidine biosynthesis; L-histidine from 5-phospho-alpha-D-ribose 1-diphosphate: step 4/9. The protein is 1-(5-phosphoribosyl)-5-[(5-phosphoribosylamino)methylideneamino] imidazole-4-carboxamide isomerase of Frankia casuarinae (strain DSM 45818 / CECT 9043 / HFP020203 / CcI3).